We begin with the raw amino-acid sequence, 302 residues long: MKTGSEFHVGIVGLGSMGMGAALSCVRAGLSTWGADLNSNACATLKEAGACGVSDNAATFAEKLDALLVLVVNATQVKQVLFGEKGVAQHLKPGTAVMVSSTIASADAQEIATALAGFGLEMLDAPVSGGAVKAANGEMTVMASGSDIAFERLAPVLEAVAGKVYRIGSEPGLGSTVKIIHQLLAGVHIAAGAEAMALAARAGIPLDVMYDVVTNAAGNSWMFENRMRHVVDGDYTPHSAVDIFVKDLGLVADTAKALHFPLPLASTALNMFTSASNAGYGKEDDSAVIKIFSGITLPGAKS.

NAD(+) contacts are provided by residues 7 to 35 (FHVGIVGLGSMGMGAALSCVRAGLSTWGA) and threonine 102. The active site involves lysine 178. Lysine 246 is an NAD(+) binding site.

It belongs to the HIBADH-related family. L-threonate dehydrogenase subfamily.

The catalysed reaction is L-threonate + NAD(+) = 2-dehydro-L-erythronate + NADH + H(+). Its function is as follows. Catalyzes oxidation of L-threonate to 2-oxo-tetronate. Can use either NAD(+) or NADP(+) as cosubstrate, with a preference for NAD(+). This is L-threonate dehydrogenase from Escherichia coli O6:H1 (strain CFT073 / ATCC 700928 / UPEC).